Consider the following 331-residue polypeptide: MSTKEKLISHVMKEEPVGSRNKVTVVGVGMVGMASAISILLKDLCDELAMVDVMEDKLKGEVMDLQHGSLFLKTKIVGDKDYSVTANSKVVVVTAGARQQEGESRLNLVQRNVNIFKFIIPNIVKYSPNCILMVVSNPVDILTYVAWKLSGFPRHRVIGSGTNLDSARFRHLIGEKLHLHPSSCHAWIVGEHGDSSVPVWSGVNVAGVSLQGLNPQMGTEGDGEDWKAIHKEVVDGAYEVIKLKGYTSWAIGMSVADLVESIIKNMHKVHPVSTLVQGMHGVKDEVFLSVPCVLGNSGLTDVIHMTLKAEEEKQVQKSAETLWGVQKELIL.

NAD(+)-binding positions include 29 to 57 (GMVGMASAISILLKDLCDELAMVDVMEDK) and arginine 98. Residues arginine 105, asparagine 137, and arginine 168 each contribute to the substrate site. Asparagine 137 contacts NAD(+). The active-site Proton acceptor is histidine 192. A substrate-binding site is contributed by threonine 247.

Belongs to the LDH/MDH superfamily. LDH family. As to quaternary structure, homotetramer.

It is found in the cytoplasm. It catalyses the reaction (S)-lactate + NAD(+) = pyruvate + NADH + H(+). It participates in fermentation; pyruvate fermentation to lactate; (S)-lactate from pyruvate: step 1/1. In terms of biological role, interconverts simultaneously and stereospecifically pyruvate and lactate with concomitant interconversion of NADH and NAD(+). The sequence is that of L-lactate dehydrogenase A chain (ldha) from Gobionotothen gibberifrons (Humped rockcod).